Reading from the N-terminus, the 148-residue chain is MYALRPTLRRSAAAALTHSKNHNYGMTPGPLALLPPIYLYRRLLRAHRKYLPREMRLLGDEYVKAEFRAHRSVDNPAHLIGFLTEWQLYAQKIEGNSWVGEKLDKGKVEKMSDEQIGQLYELMQAIQKRGTEGDLEDGDGGESGQKSQ.

Residues 1–12 constitute a mitochondrion transit peptide; it reads MYALRPTLRRSA. Positions 129-148 are disordered; the sequence is RGTEGDLEDGDGGESGQKSQ.

Belongs to the complex I LYR family. SDHAF3 subfamily. Interacts with the iron-sulfur protein subunit within the SDH catalytic dimer.

It localises to the mitochondrion matrix. Functionally, plays an essential role in the assembly of succinate dehydrogenase (SDH), an enzyme complex (also referred to as respiratory complex II) that is a component of both the tricarboxylic acid (TCA) cycle and the mitochondrial electron transport chain, and which couples the oxidation of succinate to fumarate with the reduction of ubiquinone (coenzyme Q) to ubiquinol. Promotes maturation of the iron-sulfur protein subunit of the SDH catalytic dimer, protecting it from the deleterious effects of oxidants. May act together with SDHAF1. The protein is Succinate dehydrogenase assembly factor 3, mitochondrial of Neurospora crassa (strain ATCC 24698 / 74-OR23-1A / CBS 708.71 / DSM 1257 / FGSC 987).